The following is a 249-amino-acid chain: Kallikrein-7 (249 aa).

Residues 1–21 (MGVWLLSLITVLLSLALETAG) form the signal peptide. A propeptide spans 22-25 (QGER) (activation peptide). A serine protease region spans residues 26–246 (IIDGYKCKEG…YKRWVMETMK (221 aa)). 6 cysteine pairs are disulfide-bonded: C32-C161, C51-C67, C133-C235, C140-C207, C172-C186, and C197-C222. Residues H66 and D108 each act as charge relay system in the active site. The active-site Charge relay system is the S201.

Belongs to the peptidase S1 family. Kallikrein subfamily. Expressed in skin and, at lower levels, in lung, kidney, brain, heart and spleen. In skin, expressed in high suprabasal keratinocytes and in the luminal parts of hair follicles. Not detected in liver and skeletal muscle.

It is found in the secreted. The enzyme catalyses Cleavage of proteins with aromatic side chains in the P1 position.. Inhibited by Zn2+ and Cu2+ at low micromolar concentrations. Inhibited by SERPINA12. Its function is as follows. May catalyze the degradation of intercellular cohesive structures in the cornified layer of the skin in the continuous shedding of cells from the skin surface. Specific for amino acid residues with aromatic side chains in the P1 position. Cleaves insulin A chain at '14-Tyr-|-Gln-15' and insulin B chain at '6-Leu-|-Cys-7', '16-Tyr-|-Leu-17', '25-Phe-|-Tyr-26' and '26-Tyr-|-Thr-27'. Could play a role in the activation of precursors to inflammatory cytokines. This chain is Kallikrein-7 (Klk7), found in Mus musculus (Mouse).